The sequence spans 375 residues: Isopentenyl-diphosphate delta-isomerase (375 aa).

8 to 9 serves as a coordination point for substrate; it reads RK. FMN is bound by residues Thr65, 66-68, Ser96, and Asn125; that span reads GMT. 96–98 serves as a coordination point for substrate; it reads SQR. Gln160 serves as a coordination point for substrate. Glu161 lines the Mg(2+) pocket. Residues Lys192, Thr222, 273 to 275, and 294 to 295 each bind FMN; these read GVR and AL.

It belongs to the IPP isomerase type 2 family. As to quaternary structure, homooctamer. Dimer of tetramers. The cofactor is FMN. It depends on NADPH as a cofactor. Requires Mg(2+) as cofactor.

The protein localises to the cytoplasm. It carries out the reaction isopentenyl diphosphate = dimethylallyl diphosphate. Involved in the biosynthesis of isoprenoids. Catalyzes the 1,3-allylic rearrangement of the homoallylic substrate isopentenyl (IPP) to its allylic isomer, dimethylallyl diphosphate (DMAPP). The protein is Isopentenyl-diphosphate delta-isomerase of Aeropyrum pernix (strain ATCC 700893 / DSM 11879 / JCM 9820 / NBRC 100138 / K1).